Reading from the N-terminus, the 264-residue chain is Acetyl-coenzyme A carboxylase carboxyl transferase subunit beta (264 aa).

The region spanning 4 to 264 is the CoA carboxyltransferase N-terminal domain; the sequence is LWVKCKQCQQ…CGNSLEGVES (261 aa). The Zn(2+) site is built by Cys8, Cys11, Cys27, and Cys29. The C4-type zinc-finger motif lies at 8 to 29; sequence CKQCQQILLTKELEKNLKVCRC.

The protein belongs to the AccD/PCCB family. Acetyl-CoA carboxylase is a heterohexamer composed of biotin carboxyl carrier protein (AccB), biotin carboxylase (AccC) and two subunits each of ACCase subunit alpha (AccA) and ACCase subunit beta (AccD). The cofactor is Zn(2+).

It is found in the cytoplasm. It carries out the reaction N(6)-carboxybiotinyl-L-lysyl-[protein] + acetyl-CoA = N(6)-biotinyl-L-lysyl-[protein] + malonyl-CoA. It participates in lipid metabolism; malonyl-CoA biosynthesis; malonyl-CoA from acetyl-CoA: step 1/1. Functionally, component of the acetyl coenzyme A carboxylase (ACC) complex. Biotin carboxylase (BC) catalyzes the carboxylation of biotin on its carrier protein (BCCP) and then the CO(2) group is transferred by the transcarboxylase to acetyl-CoA to form malonyl-CoA. This is Acetyl-coenzyme A carboxylase carboxyl transferase subunit beta from Heliobacterium modesticaldum (strain ATCC 51547 / Ice1).